The primary structure comprises 248 residues: Trihelix transcription factor ENAP2 (248 aa).

Positions 1 to 13 (METTTPQSKSSVS) are enriched in polar residues. A disordered region spans residues 1-20 (METTTPQSKSSVSHRPPLGR). Residues 24–113 (WSEEATATLV…RLDVLIGPVV (90 aa)) constitute a DNA-binding region (MADF). The Nuclear localization signal signature appears at 69-76 (RKKTDLQC). Positions 123–150 (SAPFKNHLNPTGSNSTGSSLEDDDEDDD) are disordered. Residues 130-141 (LNPTGSNSTGSS) show a composition bias toward polar residues. The stretch at 190-210 (YERIEGKKQQMMIELEKQRME) forms a coiled coil.

As to quaternary structure, interacts with the Agrobacterium tumefaciens virulence protein F (VirF) in the nucleus. Binds to EIN2 C-terminal region in the presence of ethylene.

It is found in the nucleus. It localises to the nucleoplasm. In terms of biological role, probable transcription regulator. Promotes histone acetylation during ethylene signaling in an EIN2-dependent manner, thus regulating positively ethylene-responsive genes. In Arabidopsis thaliana (Mouse-ear cress), this protein is Trihelix transcription factor ENAP2.